A 447-amino-acid polypeptide reads, in one-letter code: Glycogen synthase (447 aa).

R15 is a binding site for ADP-alpha-D-glucose.

The protein belongs to the glycosyltransferase 1 family. Bacterial/plant glycogen synthase subfamily.

The catalysed reaction is [(1-&gt;4)-alpha-D-glucosyl](n) + ADP-alpha-D-glucose = [(1-&gt;4)-alpha-D-glucosyl](n+1) + ADP + H(+). Its pathway is glycan biosynthesis; glycogen biosynthesis. Synthesizes alpha-1,4-glucan chains using ADP-glucose. The polypeptide is Glycogen synthase (Deinococcus geothermalis (strain DSM 11300 / CIP 105573 / AG-3a)).